The chain runs to 183 residues: Ribose 1,5-bisphosphate phosphokinase PhnN (183 aa).

Position 6-13 (6-13 (GPSGAGKD)) interacts with ATP.

The protein belongs to the ribose 1,5-bisphosphokinase family.

The catalysed reaction is alpha-D-ribose 1,5-bisphosphate + ATP = 5-phospho-alpha-D-ribose 1-diphosphate + ADP. Its pathway is metabolic intermediate biosynthesis; 5-phospho-alpha-D-ribose 1-diphosphate biosynthesis; 5-phospho-alpha-D-ribose 1-diphosphate from D-ribose 5-phosphate (route II): step 3/3. In terms of biological role, catalyzes the phosphorylation of ribose 1,5-bisphosphate to 5-phospho-D-ribosyl alpha-1-diphosphate (PRPP). The polypeptide is Ribose 1,5-bisphosphate phosphokinase PhnN (Agrobacterium fabrum (strain C58 / ATCC 33970) (Agrobacterium tumefaciens (strain C58))).